The primary structure comprises 371 residues: Cytochrome b (371 aa).

Helical transmembrane passes span 25–45 (FGSLLLTCLMLQILTGFFLAI), 69–90 (WIMQNTHAIGASLFFICIYTHI), 105–125 (WLSGTTLLIILMATAFFGYVL), and 170–190 (FFALHFILPFIIISMSSIHII). Residues His75 and His89 each contribute to the heme b site. Positions 174 and 188 each coordinate heme b. His193 is an a ubiquinone binding site. Transmembrane regions (helical) follow at residues 218 to 238 (YKDMTMVSIMIMLLLMVMTFA), 280 to 300 (LGGTLALFLSIIILTTTPFTH), 312 to 332 (LTQILFWTLIATFTTITWTAT), and 339 to 358 (FIYISQMTSIMYFSFFIMNP).

The protein belongs to the cytochrome b family. As to quaternary structure, the cytochrome bc1 complex contains 3 respiratory subunits (MT-CYB, CYC1 and UQCRFS1), 2 core proteins (UQCRC1 and UQCRC2) and probably 6 low-molecular weight proteins. Requires heme b as cofactor.

It localises to the mitochondrion inner membrane. In terms of biological role, component of the ubiquinol-cytochrome c reductase complex (complex III or cytochrome b-c1 complex) that is part of the mitochondrial respiratory chain. The b-c1 complex mediates electron transfer from ubiquinol to cytochrome c. Contributes to the generation of a proton gradient across the mitochondrial membrane that is then used for ATP synthesis. This Micruroides euryxanthus (Sonoran coral snake) protein is Cytochrome b (MT-CYB).